A 391-amino-acid polypeptide reads, in one-letter code: MKKTVRSLCSTALALTLGFTLLSGPASVQAAGNADYNLAGFSQGNTGGGIISESNTSTYKKVYNATDLALALKKNSGVKVVEIMNDLDLGWNEIPSAAQTSPFAKHNDALTHPVLKQTGVSKITVDGFNGLTIFSANGSKIKHAAITVKRSSNVIIRNLEFDELWEWDESTKGDYDKNDWDYITLEDSSGVWIDHCTFNKAYDGLVDSKKGTSGVTISWSTFKGDDGSANSWVTRQINELEANKASYPMYNYLRSSAVGLSKQDVIAISGPQKKGHLVGATSLESANANLSITLHHNLYKDIQDRMPRLRGGNAHAYNIIMDAADARSAQSRITSAMATAIASKGYKFGITSNGAISTESGAVLVEKSVIKDVQXPCTQQSDRSDQRHVHR.

Residues 1-30 (MKKTVRSLCSTALALTLGFTLLSGPASVQA) form the signal peptide. Positions 181, 203, and 207 each coordinate Ca(2+). The active site involves Arg-305.

The protein belongs to the polysaccharide lyase 1 family. It depends on Ca(2+) as a cofactor.

The protein resides in the secreted. The enzyme catalyses Eliminative cleavage of (1-&gt;4)-alpha-D-galacturonan to give oligosaccharides with 4-deoxy-alpha-D-galact-4-enuronosyl groups at their non-reducing ends.. It catalyses the reaction Eliminative cleavage of (1-&gt;4)-alpha-D-galacturonan methyl ester to give oligosaccharides with 4-deoxy-6-O-methyl-alpha-D-galact-4-enuronosyl groups at their non-reducing ends.. It participates in glycan metabolism; pectin degradation. Its function is as follows. Catalyzes the depolymerization of both polygalacturonate and pectins of various methyl esterification degree, with an endo mode of action. Shows the highest activity on 20 to 34% methylated pectin but retains 67%, 51%, 25%, and 1% of its maximum activity on polygalacturonate and 8.5%, 55 to 70%, and 90% methylated pectin, respectively. The sequence is that of Pectate lyase B from Paenibacillus amylolyticus.